The chain runs to 73 residues: Small ribosomal subunit protein eS27 (73 aa).

Cys-28, Cys-31, Cys-47, and Cys-50 together coordinate Zn(2+). The segment at Cys-28–Cys-50 adopts a C4-type zinc-finger fold.

This sequence belongs to the eukaryotic ribosomal protein eS27 family. In terms of assembly, part of the 30S ribosomal subunit. Zn(2+) serves as cofactor.

This chain is Small ribosomal subunit protein eS27, found in Aeropyrum pernix (strain ATCC 700893 / DSM 11879 / JCM 9820 / NBRC 100138 / K1).